A 362-amino-acid polypeptide reads, in one-letter code: Chorismate synthase (362 aa).

The interval 39–59 (ADLQGDLDRRKPGTSRYTTPR) is disordered. NADP(+) contacts are provided by R48 and R54. FMN-binding positions include 125–127 (RSS), 238–239 (NA), G278, 293–297 (KPTSS), and R319.

Belongs to the chorismate synthase family. In terms of assembly, homotetramer. FMNH2 serves as cofactor.

The catalysed reaction is 5-O-(1-carboxyvinyl)-3-phosphoshikimate = chorismate + phosphate. It functions in the pathway metabolic intermediate biosynthesis; chorismate biosynthesis; chorismate from D-erythrose 4-phosphate and phosphoenolpyruvate: step 7/7. Functionally, catalyzes the anti-1,4-elimination of the C-3 phosphate and the C-6 proR hydrogen from 5-enolpyruvylshikimate-3-phosphate (EPSP) to yield chorismate, which is the branch point compound that serves as the starting substrate for the three terminal pathways of aromatic amino acid biosynthesis. This reaction introduces a second double bond into the aromatic ring system. This chain is Chorismate synthase, found in Aeromonas hydrophila subsp. hydrophila (strain ATCC 7966 / DSM 30187 / BCRC 13018 / CCUG 14551 / JCM 1027 / KCTC 2358 / NCIMB 9240 / NCTC 8049).